The chain runs to 438 residues: UDP-N-acetylmuramoylalanine--D-glutamate ligase (438 aa).

Position 112–118 (112–118 (GSNGKST)) interacts with ATP.

It belongs to the MurCDEF family. Mg(2+) serves as cofactor.

The protein resides in the cytoplasm. The catalysed reaction is UDP-N-acetyl-alpha-D-muramoyl-L-alanine + D-glutamate + ATP = UDP-N-acetyl-alpha-D-muramoyl-L-alanyl-D-glutamate + ADP + phosphate + H(+). The protein operates within cell wall biogenesis; peptidoglycan biosynthesis. Cell wall formation. Catalyzes the addition of glutamate to the nucleotide precursor UDP-N-acetylmuramoyl-L-alanine (UMA). This Escherichia coli (strain K12) protein is UDP-N-acetylmuramoylalanine--D-glutamate ligase (murD).